The following is a 290-amino-acid chain: Undecaprenyl-diphosphatase (290 aa).

8 helical membrane passes run 1-21, 49-69, 101-121, 126-146, 160-180, 203-223, 232-252, and 266-286; these read MALW…FLPV, MILF…VVFW, LFWL…TLKA, VFAS…LLWW, INLK…MPGL, YSFF…AIEV, VGFS…IISL, and VFSF…IDLA.

Belongs to the UppP family.

Its subcellular location is the cell inner membrane. The enzyme catalyses di-trans,octa-cis-undecaprenyl diphosphate + H2O = di-trans,octa-cis-undecaprenyl phosphate + phosphate + H(+). In terms of biological role, catalyzes the dephosphorylation of undecaprenyl diphosphate (UPP). Confers resistance to bacitracin. In Alkalilimnicola ehrlichii (strain ATCC BAA-1101 / DSM 17681 / MLHE-1), this protein is Undecaprenyl-diphosphatase.